The following is a 304-amino-acid chain: Homoserine kinase (304 aa).

90 to 100 (PLARGLGSSAS) contributes to the ATP binding site.

The protein belongs to the GHMP kinase family. Homoserine kinase subfamily.

The protein resides in the cytoplasm. It carries out the reaction L-homoserine + ATP = O-phospho-L-homoserine + ADP + H(+). It functions in the pathway amino-acid biosynthesis; L-threonine biosynthesis; L-threonine from L-aspartate: step 4/5. Its function is as follows. Catalyzes the ATP-dependent phosphorylation of L-homoserine to L-homoserine phosphate. The chain is Homoserine kinase from Staphylococcus aureus (strain MRSA252).